Reading from the N-terminus, the 318-residue chain is Ribosomal RNA small subunit methyltransferase H (318 aa).

Residues 34-36 (GGH), Asp57, Leu91, Asp110, and Gln117 contribute to the S-adenosyl-L-methionine site.

It belongs to the methyltransferase superfamily. RsmH family.

Its subcellular location is the cytoplasm. The catalysed reaction is cytidine(1402) in 16S rRNA + S-adenosyl-L-methionine = N(4)-methylcytidine(1402) in 16S rRNA + S-adenosyl-L-homocysteine + H(+). Specifically methylates the N4 position of cytidine in position 1402 (C1402) of 16S rRNA. The chain is Ribosomal RNA small subunit methyltransferase H from Chlorobaculum parvum (strain DSM 263 / NCIMB 8327) (Chlorobium vibrioforme subsp. thiosulfatophilum).